The sequence spans 261 residues: uncharacterized protein (261 aa).

NADP(+)-binding residues include isoleucine 33, aspartate 78, and asparagine 105. Serine 157 (proton donor) is an active-site residue. 3 residues coordinate NADP(+): tyrosine 172, lysine 176, and serine 206. Tyrosine 172 functions as the Proton acceptor in the catalytic mechanism. Catalysis depends on lysine 176, which acts as the Lowers pKa of active site Tyr.

The protein belongs to the short-chain dehydrogenases/reductases (SDR) family.

The protein localises to the cytoplasm. Its subcellular location is the nucleus. This is an uncharacterized protein from Schizosaccharomyces pombe (strain 972 / ATCC 24843) (Fission yeast).